A 1412-amino-acid polypeptide reads, in one-letter code: MKALLDLFKQVQQPEVFDAIKIGLASPDKIRSWSFGEVKKPETINYRTFKPERDGLFCAKIFGPIKDYECLCGKYKRLKHRGVICEKCGVEVTLAKVRRERMGHIELASPVAHIWFLKSLPSRLGMVLDMTLRDIERVLYFEAYVVIDPGMTPLKARQIMTEEDYYNKVEEYGDEFRAEMGAEGVRELLRAINIDEQVEMLRTELKNTGSEAKIKKYAKRLKVLEAFQRSGIKPDWMVLEVLPVLPPELRPLVPLDGGRFATSDLNDLYRRVINRNNRLKRLLELKAPEIIVRNEKRMLQEAVDSLLDNGRRGKAMTGANKRPLKSLADMIKGKGGRFRQNLLGKRVDYSGRSVIVVGPTLKLHQCGLPKLMALELFKPFIFNKLEVMGVATTIKAAKKEVENQTPVVWDILEEVIREHPVMLNRAPTLHRLGIQAFEPVLIEGKAIQLHPLVCAAFNADFDGDQMAVHVPLSLEAQMEARTLMLASNNILFPANGDPSIVPSQDIVLGLYYATREAVNAKGEGLTFTGVSEALRAYENKEVELASRVNVRITEMVHNEDKSDGAPAFVPKISLYATTVGRAILSEILPPGLPFSVLNKPLKKKEISRLINTAFRKCGLRETVIFADQLMQSGFRLATRAGISICVDDMLVPPQKETIVGDAAKKVKEYDRQYMSGLVTSQERYNNVVDIWSATSEAVGKAMMEQLSTEPVTDRDGNETRQESFNSIYMMADSGARGSAVQIRQLAGMRGLMAKPDGSIIETPITANFREGLNVLQYFISTHGARKGLADTALKTANSGYLTRRLVDVTQDLVVVEDDCGTSNGVAMKALVEGGEVVEALRDRILGRVTVADVVNPESQETLYETGTLLDEDAVEEIERLGIDEVRVRTPLTCETRYGLCAACYGRDLGRGSSVNVGEAVGVIAAQSIGEPGTQLTMRTFHIGGAASRAAVASSVEAKSNGTVRFTATMRYVTNAKGEQIVISRSGEAMITDDHGRERERHKVPYGATLLQLDGAQIKAGTQLATWDPMTRPIITEYGGTVKFENVEEGVTVAKQIDDVTGLSTLVVIDVKRRGSQASKTVRPQVKLLDANGEEVKIPNTEHSVQIGFQVGALITVKDGQQVQVGEVLARIPTESQKTRDITGGLPRVAELFEARSPKDAGILAEVTGTTSFGKDTKGKQRLVITDLEGNQHEFLIAKEKQVLVHDGQVVNKGEMIVDGPADPHDILRLQGVEALSRYIVDEVQDVYRLQGVKINDKHIEVIVRQMLRRVQITDNGDTRFIPGEQVERSDMLDENDRMIAEDKRPATYENVLLGITKASLSTDSFISAASFQETTRVLTEAAIMGKRDDLRGLKENVIVGRLIPAGTGLAFHKARKSKELSDRERFDQIAAEESFEFGTPETPAAEQQHSGE.

Zn(2+) contacts are provided by C70, C72, C85, and C88. Mg(2+) contacts are provided by D460, D462, and D464. Residues C819, C893, C900, and C903 each coordinate Zn(2+). Residues 1391–1412 form a disordered region; it reads AEESFEFGTPETPAAEQQHSGE.

It belongs to the RNA polymerase beta' chain family. The RNAP catalytic core consists of 2 alpha, 1 beta, 1 beta' and 1 omega subunit. When a sigma factor is associated with the core the holoenzyme is formed, which can initiate transcription. Mg(2+) is required as a cofactor. Zn(2+) serves as cofactor.

It catalyses the reaction RNA(n) + a ribonucleoside 5'-triphosphate = RNA(n+1) + diphosphate. Its function is as follows. DNA-dependent RNA polymerase catalyzes the transcription of DNA into RNA using the four ribonucleoside triphosphates as substrates. This chain is DNA-directed RNA polymerase subunit beta', found in Paraburkholderia xenovorans (strain LB400).